We begin with the raw amino-acid sequence, 694 residues long: MATPLKLYRNIGIAAHVDAGKTTTTERVLYYTGMSHKIGEVHDGAATMDWMVQEQERGITITSAATTCYWSGMDKQFESHRINIIDTPGHVDFMIEVERSLRVLDGAVVVFDSVAGVEPQSETVWRQANKYGVPRIVFVNKMDRMGANFLRVVSQIKQRLGSTPVVLQLPIGAEEEFKGVIDLIKMKAIHWDEENKGMTFKYVDIPADLKSTCEEYRAHIIEAAAEYSEELMEKYLEGEEFTEAEIKKALRHLTITNKVVPVFCGSAFKNKGVQAVLDGVIEYLPSPTDIPDIQGVDEHGDVIHRKTSYDEPFSALAFKIATDPFVGTLTYFRAYSGILKSGDTVYNSVKGKKERIGRLLQMHANSREEIKEVRAGDIAAAVGLKTVTTGDTLCDQDKVVILERMDFPDPVIAVAVEPKTKADQEKMGIALGKLAQEDPSFRVHTDEESGQTIIQGMGELHLEIIVDRMKREFNVEANVGKPQVAYRETLKQAVEQEGKFVRQSGGRGQYGHVWLKIEPQEPGKGYEFINAIVGGVIPKEYIPAVDKGIQEQMQNGVIAGYPVVDVKVTLFDGSFHEVDSSEMAFKIAGSQCFKQGALKAKPVLLEPIMSVEVVTPEDYMGDVMGDLNRRRGLVQGMEDSPAGKIVRAEVPLAEMFGYSTDLRSATQGRATYTMEFCKYAEAPTNIAEAIIKKQ.

Positions 6-288 constitute a tr-type G domain; that stretch reads KLYRNIGIAA…GVIEYLPSPT (283 aa). Residues 15–22, 86–90, and 140–143 each bind GTP; these read AHVDAGKT, DTPGH, and NKMD.

The protein belongs to the TRAFAC class translation factor GTPase superfamily. Classic translation factor GTPase family. EF-G/EF-2 subfamily.

It is found in the cytoplasm. Catalyzes the GTP-dependent ribosomal translocation step during translation elongation. During this step, the ribosome changes from the pre-translocational (PRE) to the post-translocational (POST) state as the newly formed A-site-bound peptidyl-tRNA and P-site-bound deacylated tRNA move to the P and E sites, respectively. Catalyzes the coordinated movement of the two tRNA molecules, the mRNA and conformational changes in the ribosome. The polypeptide is Elongation factor G (Legionella pneumophila subsp. pneumophila (strain Philadelphia 1 / ATCC 33152 / DSM 7513)).